We begin with the raw amino-acid sequence, 76 residues long: UPF0346 protein OEOE_1017 (76 aa).

Belongs to the UPF0346 family.

This is UPF0346 protein OEOE_1017 from Oenococcus oeni (strain ATCC BAA-331 / PSU-1).